The following is a 610-amino-acid chain: Major facilitator superfamily multidrug transporter FLU1 (610 aa).

N3 and N21 each carry an N-linked (GlcNAc...) asparagine glycan. The span at 47–58 shows a compositional bias: polar residues; that stretch reads GPTDSVESSSNT. A disordered region spans residues 47 to 74; that stretch reads GPTDSVESSSNTADEENEINSFNAQNVK. 11 consecutive transmembrane segments (helical) span residues 165-185, 209-229, 231-251, 262-282, 292-312, 323-343, 408-428, 437-457, 478-498, 507-527, and 530-550; these read ILYC…SAMF, LFVF…ELFG, KLVM…VATA, FFAG…MADM, IAIF…LGAF, WTSY…TFLL, AFIY…FLGE, ELPY…IMLF, LEPM…LGWT, WIVP…IFLP, and NYII…NTFI. A glycan (N-linked (GlcNAc...) asparagine) is linked at N568. Residues 573 to 593 form a helical membrane-spanning segment; that stretch reads WASTLLGCIGILLLPMPFVFY.

This sequence belongs to the major facilitator superfamily. DHA1 family. Polyamines/proton antiporter (TC 2.A.1.2.16) subfamily.

It localises to the cell membrane. Functionally, major facilitator superfamily transporter that mediates resistance to structurally and functionally unrelated compounds including cycloheximide but also azoles such as fuconazole, ketoconazole and itraconazole. Also mediates efflux of histatin 5, a salivary human antimicrobial peptide, and is responsible for reduction of its toxicity in C.albicans. This is Major facilitator superfamily multidrug transporter FLU1 from Candida albicans (strain SC5314 / ATCC MYA-2876) (Yeast).